The following is a 525-amino-acid chain: Peptide chain release factor 3 (525 aa).

Residues 9 to 276 enclose the tr-type G domain; it reads AKRRTFAIIS…GFTRYAPAPQ (268 aa). Residues 18–25, 86–90, and 140–143 contribute to the GTP site; these read SHPDAGKT, DTPGH, and NKFD.

It belongs to the TRAFAC class translation factor GTPase superfamily. Classic translation factor GTPase family. PrfC subfamily.

It localises to the cytoplasm. In terms of biological role, increases the formation of ribosomal termination complexes and stimulates activities of RF-1 and RF-2. It binds guanine nucleotides and has strong preference for UGA stop codons. It may interact directly with the ribosome. The stimulation of RF-1 and RF-2 is significantly reduced by GTP and GDP, but not by GMP. This chain is Peptide chain release factor 3, found in Francisella tularensis subsp. tularensis (strain WY96-3418).